The sequence spans 209 residues: N-(5'-phosphoribosyl)anthranilate isomerase (209 aa).

This sequence belongs to the TrpF family.

The catalysed reaction is N-(5-phospho-beta-D-ribosyl)anthranilate = 1-(2-carboxyphenylamino)-1-deoxy-D-ribulose 5-phosphate. It functions in the pathway amino-acid biosynthesis; L-tryptophan biosynthesis; L-tryptophan from chorismate: step 3/5. This is N-(5'-phosphoribosyl)anthranilate isomerase from Erythrobacter litoralis (strain HTCC2594).